A 307-amino-acid chain; its full sequence is Putative lipid kinase SE_0507 (307 aa).

Residues glutamine 3–tyrosine 139 form the DAGKc domain. ATP-binding positions include serine 44, glycine 74–glutamate 80, and threonine 101. 3 residues coordinate Mg(2+): serine 220, aspartate 223, and arginine 225. Catalysis depends on glutamate 281, which acts as the Proton acceptor.

The protein belongs to the diacylglycerol/lipid kinase family. Mg(2+) is required as a cofactor.

Its function is as follows. May catalyze the ATP-dependent phosphorylation of lipids other than diacylglycerol (DAG). In Staphylococcus epidermidis (strain ATCC 12228 / FDA PCI 1200), this protein is Putative lipid kinase SE_0507.